Here is a 552-residue protein sequence, read N- to C-terminus: Putative transport protein HSM_0534 (552 aa).

The next 5 helical transmembrane spans lie at 4–24, 28–48, 67–87, 95–115, and 157–177; these read IAIT…IGHW, GVGL…HFMN, LILF…ASLL, GLAT…YKVV, and MAYA…MWLI. 2 consecutive RCK C-terminal domains span residues 190–275 and 277–360; these read KQFQ…VIGE and IDMP…IIGN. Transmembrane regions (helical) follow at residues 370 to 390, 402 to 424, 438 to 458, 463 to 483, 495 to 515, and 529 to 549; these read MLPV…PFYI, AGGP…LYWF, IVLF…DTLV, LEWM…TGII, LCGL…ANAI, and VYPL…ILLW.

The protein belongs to the AAE transporter (TC 2.A.81) family. YidE subfamily.

The protein resides in the cell membrane. In Histophilus somni (strain 2336) (Haemophilus somnus), this protein is Putative transport protein HSM_0534.